A 752-amino-acid polypeptide reads, in one-letter code: Translation initiation factor IF-2 (752 aa).

Residues 148-159 (KKVKDKNKKEEP) show a composition bias toward basic and acidic residues. Positions 148-170 (KKVKDKNKKEEPAVTPSTAPRKK) are disordered. A tr-type G domain is found at 250–419 (PRPPIVTVMG…ALQAEIMELK (170 aa)). The segment at 259–266 (GHVDHGKT) is G1. GTP is bound at residue 259–266 (GHVDHGKT). The tract at residues 284–288 (GITQH) is G2. Residues 305–308 (DTPG) form a G3 region. GTP contacts are provided by residues 305–309 (DTPGH) and 359–362 (NKID). Residues 359–362 (NKID) form a G4 region. The segment at 395–397 (SAK) is G5.

This sequence belongs to the TRAFAC class translation factor GTPase superfamily. Classic translation factor GTPase family. IF-2 subfamily.

Its subcellular location is the cytoplasm. One of the essential components for the initiation of protein synthesis. Protects formylmethionyl-tRNA from spontaneous hydrolysis and promotes its binding to the 30S ribosomal subunits. Also involved in the hydrolysis of GTP during the formation of the 70S ribosomal complex. The chain is Translation initiation factor IF-2 from Thermodesulfovibrio yellowstonii (strain ATCC 51303 / DSM 11347 / YP87).